A 97-amino-acid chain; its full sequence is Putative pterin-4-alpha-carbinolamine dehydratase (97 aa).

Belongs to the pterin-4-alpha-carbinolamine dehydratase family.

The enzyme catalyses (4aS,6R)-4a-hydroxy-L-erythro-5,6,7,8-tetrahydrobiopterin = (6R)-L-erythro-6,7-dihydrobiopterin + H2O. This Rhizorhabdus wittichii (strain DSM 6014 / CCUG 31198 / JCM 15750 / NBRC 105917 / EY 4224 / RW1) (Sphingomonas wittichii) protein is Putative pterin-4-alpha-carbinolamine dehydratase.